A 232-amino-acid chain; its full sequence is Ribonuclease P protein component 3 (232 aa).

The protein belongs to the eukaryotic/archaeal RNase P protein component 3 family. As to quaternary structure, consists of a catalytic RNA component and at least 4-5 protein subunits.

It localises to the cytoplasm. It carries out the reaction Endonucleolytic cleavage of RNA, removing 5'-extranucleotides from tRNA precursor.. Part of ribonuclease P, a protein complex that generates mature tRNA molecules by cleaving their 5'-ends. The polypeptide is Ribonuclease P protein component 3 (Methanococcus maripaludis (strain C6 / ATCC BAA-1332)).